A 347-amino-acid polypeptide reads, in one-letter code: Probable dual-specificity RNA methyltransferase RlmN (347 aa).

The active-site Proton acceptor is the Glu-93. The region spanning 100-323 (KAKRKTACVS…KKAGLNISTR (224 aa)) is the Radical SAM core domain. Cys-107 and Cys-334 are disulfide-bonded. Residues Cys-114, Cys-118, and Cys-121 each contribute to the [4Fe-4S] cluster site. Residues 160–161 (GE), Ser-192, 215–217 (SLT), and Asn-291 contribute to the S-adenosyl-L-methionine site. Cys-334 serves as the catalytic S-methylcysteine intermediate.

Belongs to the radical SAM superfamily. RlmN family. [4Fe-4S] cluster is required as a cofactor.

It is found in the cytoplasm. The enzyme catalyses adenosine(2503) in 23S rRNA + 2 reduced [2Fe-2S]-[ferredoxin] + 2 S-adenosyl-L-methionine = 2-methyladenosine(2503) in 23S rRNA + 5'-deoxyadenosine + L-methionine + 2 oxidized [2Fe-2S]-[ferredoxin] + S-adenosyl-L-homocysteine. The catalysed reaction is adenosine(37) in tRNA + 2 reduced [2Fe-2S]-[ferredoxin] + 2 S-adenosyl-L-methionine = 2-methyladenosine(37) in tRNA + 5'-deoxyadenosine + L-methionine + 2 oxidized [2Fe-2S]-[ferredoxin] + S-adenosyl-L-homocysteine. Its function is as follows. Specifically methylates position 2 of adenine 2503 in 23S rRNA and position 2 of adenine 37 in tRNAs. This is Probable dual-specificity RNA methyltransferase RlmN from Treponema denticola (strain ATCC 35405 / DSM 14222 / CIP 103919 / JCM 8153 / KCTC 15104).